Reading from the N-terminus, the 467-residue chain is Glutamate--tRNA ligase (467 aa).

A 'HIGH' region motif is present at residues 9 to 19; sequence PSPTGYLHIGG. The short motif at 237–241 is the 'KMSKS' region element; sequence KLSKR. Lys-240 serves as a coordination point for ATP.

Belongs to the class-I aminoacyl-tRNA synthetase family. Glutamate--tRNA ligase type 1 subfamily. In terms of assembly, monomer.

It localises to the cytoplasm. It carries out the reaction tRNA(Glu) + L-glutamate + ATP = L-glutamyl-tRNA(Glu) + AMP + diphosphate. Its function is as follows. Catalyzes the attachment of glutamate to tRNA(Glu) in a two-step reaction: glutamate is first activated by ATP to form Glu-AMP and then transferred to the acceptor end of tRNA(Glu). This chain is Glutamate--tRNA ligase, found in Xanthomonas campestris pv. campestris (strain B100).